A 410-amino-acid chain; its full sequence is Na(+)-translocating NADH-quinone reductase subunit B (410 aa).

The next 3 helical transmembrane spans lie at 56–76, 119–139, and 159–179; these read MMILVWLALFPAMFYGMYNVG, LFGAIYFLPIYATVFIVGGFW, and SILFALIVPPTLPLWQAALGI. Threonine 232 is subject to FMN phosphoryl threonine. Transmembrane regions (helical) follow at residues 266 to 286, 293 to 313, 318 to 338, 347 to 367, and 377 to 397; these read GSIGEVSTLALLIGGAFIVFA, IIAGVMIGMIAMSSLFNFIGS, MFAMPWYWHLVVGGFAIGMLF, SFTNVGKWWYGALIGVMCVLI, and GMMLAILFANLFAPIFDYFVA.

Belongs to the NqrB/RnfD family. Composed of six subunits; NqrA, NqrB, NqrC, NqrD, NqrE and NqrF. The cofactor is FMN.

It localises to the cell inner membrane. The enzyme catalyses a ubiquinone + n Na(+)(in) + NADH + H(+) = a ubiquinol + n Na(+)(out) + NAD(+). NQR complex catalyzes the reduction of ubiquinone-1 to ubiquinol by two successive reactions, coupled with the transport of Na(+) ions from the cytoplasm to the periplasm. NqrA to NqrE are probably involved in the second step, the conversion of ubisemiquinone to ubiquinol. The protein is Na(+)-translocating NADH-quinone reductase subunit B of Neisseria meningitidis serogroup A / serotype 4A (strain DSM 15465 / Z2491).